We begin with the raw amino-acid sequence, 415 residues long: Packaging protein 3 (415 aa).

The tract at residues Met-1 to Arg-55 is disordered. The segment at Met-1–Ser-173 is interaction with packaging protein 1. 2 positions are modified to phosphoserine; by host: Ser-75 and Ser-360. Low complexity predominate over residues Gly-381 to Gly-394. The interval Gly-381–Tyr-415 is disordered. The segment covering Glu-400 to Tyr-415 has biased composition (acidic residues).

The protein belongs to the adenoviridae packaging protein 3 family. In terms of assembly, part of the genome packaging complex composed of packaging proteins 1, 2 and 3; this complex specifically binds to the packaging sequence on the left end of viral genomic DNA and performs packaging of the viral genome. Interacts with hexon-linking protein IIIa; this interaction is required to promote correct genome packaging. Post-translationally, cleaved at different sites by the viral protease during virion maturation.

Its subcellular location is the host nucleus. Its function is as follows. Involved in viral genome packaging through its interaction with packaging proteins 1 and 2. After proteolytic cleavage by adenovirus protease, L1 52/55k protein is removed from the capsid during viral maturation. The polypeptide is Packaging protein 3 (Homo sapiens (Human)).